The chain runs to 215 residues: tRNA (guanine-N(7)-)-methyltransferase (215 aa).

4 residues coordinate S-adenosyl-L-methionine: Glu44, Glu69, Asp96, and Asp118. The active site involves Asp118. Residue Lys122 coordinates substrate. Residues Arg124–Arg129 are interaction with RNA. Substrate is bound by residues Asp154 and Thr192–Glu195.

Belongs to the class I-like SAM-binding methyltransferase superfamily. TrmB family.

It catalyses the reaction guanosine(46) in tRNA + S-adenosyl-L-methionine = N(7)-methylguanosine(46) in tRNA + S-adenosyl-L-homocysteine. It functions in the pathway tRNA modification; N(7)-methylguanine-tRNA biosynthesis. Its function is as follows. Catalyzes the formation of N(7)-methylguanine at position 46 (m7G46) in tRNA. This chain is tRNA (guanine-N(7)-)-methyltransferase, found in Limosilactobacillus fermentum (strain NBRC 3956 / LMG 18251) (Lactobacillus fermentum).